A 192-amino-acid chain; its full sequence is Peptidyl-tRNA hydrolase (192 aa).

Tyr14 provides a ligand contact to tRNA. The Proton acceptor role is filled by His19. 2 residues coordinate tRNA: Tyr66 and Asn68.

The protein belongs to the PTH family. In terms of assembly, monomer.

Its subcellular location is the cytoplasm. The catalysed reaction is an N-acyl-L-alpha-aminoacyl-tRNA + H2O = an N-acyl-L-amino acid + a tRNA + H(+). Hydrolyzes ribosome-free peptidyl-tRNAs (with 1 or more amino acids incorporated), which drop off the ribosome during protein synthesis, or as a result of ribosome stalling. In terms of biological role, catalyzes the release of premature peptidyl moieties from peptidyl-tRNA molecules trapped in stalled 50S ribosomal subunits, and thus maintains levels of free tRNAs and 50S ribosomes. This is Peptidyl-tRNA hydrolase from Coprothermobacter proteolyticus (strain ATCC 35245 / DSM 5265 / OCM 4 / BT).